The chain runs to 521 residues: U4/U6 small nuclear ribonucleoprotein Prp4 (521 aa).

K26 is subject to N6-acetyllysine. 7 WD repeats span residues 228–267 (GDDR…LLHT), 270–317 (GHNT…PVAD), 320–359 (GHTV…EILH), 362–401 (GHSM…CIMF), 404–443 (GHLK…CVYT), 446–486 (AHQN…PLKT), and 489–521 (GHEG…WMAE).

In terms of assembly, component of the precatalytic spliceosome (spliceosome B complex). Component of the U4/U6-U5 tri-snRNP complex, a building block of the precatalytic spliceosome (spliceosome B complex). The U4/U6-U5 tri-snRNP complex is composed of the U4, U6 and U5 snRNAs and at least PRPF3, PRPF4, PRPF6, PRPF8, PRPF31, SNRNP200, TXNL4A, SNRNP40, SNRPB, SNRPD1, SNRPD2, SNRPD3, SNRPE, SNRPF, SNRPG, DDX23, CD2BP2, PPIH, SNU13, EFTUD2, SART1 and USP39, plus LSM2, LSM3, LSM4, LSM5, LSM6, LSM7 and LSM8. Interacts directly with PRPF18, PPIH and PRPF3. Part of a heteromeric complex containing PPIH, PRPF3 and PRPF4 that is stable in the absence of RNA. Interacts with ERCC6.

The protein localises to the nucleus. It localises to the nucleus speckle. Its function is as follows. Plays a role in pre-mRNA splicing as component of the U4/U6-U5 tri-snRNP complex that is involved in spliceosome assembly, and as component of the precatalytic spliceosome (spliceosome B complex). This Mus musculus (Mouse) protein is U4/U6 small nuclear ribonucleoprotein Prp4 (Prpf4).